Consider the following 174-residue polypeptide: Gamma-crystallin D (174 aa).

2 Beta/gamma crystallin 'Greek key' domains span residues 2–40 (GKIT…RVDS) and 41–83 (GCWM…RLIP). The segment at 84–87 (HAGS) is connecting peptide. 2 Beta/gamma crystallin 'Greek key' domains span residues 88–128 (HRLR…NVLE) and 129–171 (GSWV…RRVI).

It belongs to the beta/gamma-crystallin family.

Crystallins are the dominant structural components of the vertebrate eye lens. The polypeptide is Gamma-crystallin D (CRYGD) (Bos taurus (Bovine)).